The following is a 693-amino-acid chain: eEF1A lysine and N-terminal methyltransferase (693 aa).

This sequence belongs to the methyltransferase superfamily.

The enzyme catalyses L-lysyl-[protein] + S-adenosyl-L-methionine = N(6)-methyl-L-lysyl-[protein] + S-adenosyl-L-homocysteine + H(+). It catalyses the reaction N(6)-methyl-L-lysyl-[protein] + S-adenosyl-L-methionine = N(6),N(6)-dimethyl-L-lysyl-[protein] + S-adenosyl-L-homocysteine + H(+). The catalysed reaction is N-terminal glycyl-L-lysyl-L-glutamyl-[protein] + 3 S-adenosyl-L-methionine = N-terminal N,N,N-trimethyl-glycyl-L-lysyl-L-glutamyl-[protein] + 3 S-adenosyl-L-homocysteine + 3 H(+). Dual methyltransferase that catalyzes methylation of elongation factor 1-alpha (eef1a1 and eef1a2) at two different positions, and is therefore involved in the regulation of mRNA translation. Via its C-terminus, methylates the N-terminus of eef1a1 and eef1a2. Via its N-terminus dimethylates lysine residues of eef1a1 and eef1a2. The protein is eEF1A lysine and N-terminal methyltransferase (mettl13) of Xenopus laevis (African clawed frog).